The following is an 891-amino-acid chain: DNA mismatch repair protein MutS (891 aa).

639–646 (GPNMAGKS) contributes to the ATP binding site. The segment at 827–854 (TIQEARPSAQGSEEKTPSSPAEKGLSLF) is disordered.

Belongs to the DNA mismatch repair MutS family.

In terms of biological role, this protein is involved in the repair of mismatches in DNA. It is possible that it carries out the mismatch recognition step. This protein has a weak ATPase activity. In Treponema denticola (strain ATCC 35405 / DSM 14222 / CIP 103919 / JCM 8153 / KCTC 15104), this protein is DNA mismatch repair protein MutS.